A 94-amino-acid polypeptide reads, in one-letter code: Co-chaperonin GroES (94 aa).

This sequence belongs to the GroES chaperonin family. In terms of assembly, heptamer of 7 subunits arranged in a ring. Interacts with the chaperonin GroEL.

The protein resides in the cytoplasm. Together with the chaperonin GroEL, plays an essential role in assisting protein folding. The GroEL-GroES system forms a nano-cage that allows encapsulation of the non-native substrate proteins and provides a physical environment optimized to promote and accelerate protein folding. GroES binds to the apical surface of the GroEL ring, thereby capping the opening of the GroEL channel. The sequence is that of Co-chaperonin GroES from Ehrlichia chaffeensis (strain ATCC CRL-10679 / Arkansas).